Consider the following 264-residue polypeptide: Probable glycerophosphodiester phosphodiesterase 2 (264 aa).

In terms of domain architecture, GP-PDE spans 17–255 (RIAMAHRGFT…DRADLLRDVL (239 aa)). Catalysis depends on histidine 22, which acts as the Proton acceptor. A divalent metal cation-binding residues include glutamate 50, aspartate 52, and histidine 65. Histidine 65 acts as the Proton donor in catalysis.

It belongs to the glycerophosphoryl diester phosphodiesterase family. Requires a divalent metal cation as cofactor.

The enzyme catalyses a sn-glycero-3-phosphodiester + H2O = an alcohol + sn-glycerol 3-phosphate + H(+). In terms of biological role, glycerophosphodiester phosphodiesterase hydrolyzes glycerophosphodiesters into glycerol-3-phosphate (G3P) and the corresponding alcohol. This chain is Probable glycerophosphodiester phosphodiesterase 2, found in Mycobacterium tuberculosis (strain ATCC 25618 / H37Rv).